The chain runs to 182 residues: UPF0200 protein Mthe_1012 (182 aa).

Residue 8–15 (GMPGSGKS) coordinates ATP.

The protein belongs to the UPF0200 family.

This chain is UPF0200 protein Mthe_1012, found in Methanothrix thermoacetophila (strain DSM 6194 / JCM 14653 / NBRC 101360 / PT) (Methanosaeta thermophila).